The chain runs to 424 residues: Putative pachytene checkpoint protein 2 (424 aa).

179–186 is an ATP binding site; that stretch reads GPPGTGKT.

This sequence belongs to the AAA ATPase family. PCH2 subfamily.

In terms of biological role, plays a key role in chromosome recombination during meiosis. This chain is Putative pachytene checkpoint protein 2 (pch-2), found in Caenorhabditis elegans.